Consider the following 239-residue polypeptide: Large ribosomal subunit protein uL2 (239 aa).

2 disordered regions span residues methionine 1–alanine 28 and serine 199–glycine 239. Positions lysine 225–glycine 239 are enriched in basic residues.

This sequence belongs to the universal ribosomal protein uL2 family. Part of the 50S ribosomal subunit. Forms a bridge to the 30S subunit in the 70S ribosome.

Its function is as follows. One of the primary rRNA binding proteins. Required for association of the 30S and 50S subunits to form the 70S ribosome, for tRNA binding and peptide bond formation. It has been suggested to have peptidyltransferase activity; this is somewhat controversial. Makes several contacts with the 16S rRNA in the 70S ribosome. This Staphylothermus marinus (strain ATCC 43588 / DSM 3639 / JCM 9404 / F1) protein is Large ribosomal subunit protein uL2.